The following is a 319-amino-acid chain: Phosphoenolpyruvate transferase (319 aa).

Asp-50 is a 7,8-didemethyl-8-hydroxy-5-deazariboflavin binding site.

It belongs to the CofD family. In terms of assembly, homodimer. Requires Mg(2+) as cofactor.

It carries out the reaction enolpyruvoyl-2-diphospho-5'-guanosine + 7,8-didemethyl-8-hydroxy-5-deazariboflavin = dehydro coenzyme F420-0 + GMP + H(+). It participates in cofactor biosynthesis; coenzyme F420 biosynthesis. Its function is as follows. Catalyzes the transfer of the phosphoenolpyruvate moiety from enoylpyruvoyl-2-diphospho-5'-guanosine (EPPG) to 7,8-didemethyl-8-hydroxy-5-deazariboflavin (FO) with the formation of dehydro coenzyme F420-0 and GMP. The sequence is that of Phosphoenolpyruvate transferase from Streptomyces coelicolor (strain ATCC BAA-471 / A3(2) / M145).